Reading from the N-terminus, the 99-residue chain is U2-theraphotoxin-Lsp1a (99 aa).

The first 22 residues, 1–22 (MNTIQVIIFAVVLVLTVTVGQA), serve as a signal peptide directing secretion. Residues 23 to 57 (DEDSPEASLLRKLKEAEASLFGQNLEESRNSRQKR) constitute a propeptide that is removed on maturation. 3 disulfides stabilise this stretch: cysteine 58–cysteine 73, cysteine 65–cysteine 78, and cysteine 72–cysteine 93.

This sequence belongs to the neurotoxin 14 (magi-1) family. 08 (Ltx-4) subfamily. In terms of tissue distribution, expressed by the venom gland.

It localises to the secreted. In terms of biological role, insecticidal neurotoxin. The sequence is that of U2-theraphotoxin-Lsp1a from Lasiodora sp. (strain IBSP 8539) (Brazilian salmon pink birdeater).